The sequence spans 215 residues: Phosphatidylserine decarboxylase proenzyme (215 aa).

Ser-184 (schiff-base intermediate with substrate; via pyruvic acid) is an active-site residue. Ser-184 is subject to Pyruvic acid (Ser); by autocatalysis.

It belongs to the phosphatidylserine decarboxylase family. PSD-A subfamily. Heterodimer of a large membrane-associated beta subunit and a small pyruvoyl-containing alpha subunit. The cofactor is pyruvate. Post-translationally, is synthesized initially as an inactive proenzyme. Formation of the active enzyme involves a self-maturation process in which the active site pyruvoyl group is generated from an internal serine residue via an autocatalytic post-translational modification. Two non-identical subunits are generated from the proenzyme in this reaction, and the pyruvate is formed at the N-terminus of the alpha chain, which is derived from the carboxyl end of the proenzyme. The post-translation cleavage follows an unusual pathway, termed non-hydrolytic serinolysis, in which the side chain hydroxyl group of the serine supplies its oxygen atom to form the C-terminus of the beta chain, while the remainder of the serine residue undergoes an oxidative deamination to produce ammonia and the pyruvoyl prosthetic group on the alpha chain.

It localises to the cell membrane. It carries out the reaction a 1,2-diacyl-sn-glycero-3-phospho-L-serine + H(+) = a 1,2-diacyl-sn-glycero-3-phosphoethanolamine + CO2. It participates in phospholipid metabolism; phosphatidylethanolamine biosynthesis; phosphatidylethanolamine from CDP-diacylglycerol: step 2/2. Its function is as follows. Catalyzes the formation of phosphatidylethanolamine (PtdEtn) from phosphatidylserine (PtdSer). The protein is Phosphatidylserine decarboxylase proenzyme of Ralstonia nicotianae (strain ATCC BAA-1114 / GMI1000) (Ralstonia solanacearum).